We begin with the raw amino-acid sequence, 228 residues long: Small ribosomal subunit protein uS2c (228 aa).

Belongs to the universal ribosomal protein uS2 family.

Its subcellular location is the plastid. It localises to the chloroplast. The sequence is that of Small ribosomal subunit protein uS2c (rps2) from Mesostigma viride (Green alga).